The chain runs to 341 residues: Ectoine-binding periplasmic protein TeaA (341 aa).

The signal sequence occupies residues Met-1–Ser-25. L-ectoine is bound by residues Glu-34, Arg-169, Asn-209, Trp-213, and Phe-234.

Belongs to the bacterial solute-binding protein 7 family. In terms of assembly, monomer. The complex comprises the extracytoplasmic solute receptor protein TeaA, and the two transmembrane proteins TeaB and TeaC.

The protein resides in the periplasm. Functionally, part of the tripartite ATP-independent periplasmic (TRAP) transport system TeaABC involved in the uptake of ectoine and hydroxyectoine in response to osmotic upshock. Probably functions as a recovery system for synthesized ectoine that leaks out of the cell. Binds ectoine with high affinity. Affinity for hydroxyectoine is approximately 20-fold lower. The protein is Ectoine-binding periplasmic protein TeaA (teaA) of Halomonas elongata (strain ATCC 33173 / DSM 2581 / NBRC 15536 / NCIMB 2198 / 1H9).